The primary structure comprises 170 residues: Flavodoxin (170 aa).

Positions 4–165 (IGLFFGTQTG…RIQAWVAQLK (162 aa)) constitute a Flavodoxin-like domain.

Belongs to the flavodoxin family. FMN serves as cofactor.

Its function is as follows. Low-potential electron donor to a number of redox enzymes. This Picosynechococcus sp. (strain ATCC 27264 / PCC 7002 / PR-6) (Agmenellum quadruplicatum) protein is Flavodoxin (isiB).